The following is a 90-amino-acid chain: Small ribosomal subunit protein uS15c (90 aa).

It belongs to the universal ribosomal protein uS15 family. As to quaternary structure, part of the 30S ribosomal subunit.

The protein resides in the plastid. The protein localises to the chloroplast. The chain is Small ribosomal subunit protein uS15c (rps15) from Phaseolus vulgaris (Kidney bean).